Reading from the N-terminus, the 628-residue chain is (+)-alpha pinene synthase 1, chloroplastic (628 aa).

Mg(2+) is bound by residues Asp379, Asp383, and Asp531. Residues 379–383 (DDIYD) carry the DDXXD motif motif.

Belongs to the terpene synthase family. Tpsd subfamily. It depends on Mg(2+) as a cofactor. Mn(2+) is required as a cofactor.

Its subcellular location is the plastid. The protein localises to the chloroplast. It carries out the reaction (2E)-geranyl diphosphate = (1R,5R)-alpha-pinene + diphosphate. It functions in the pathway terpene metabolism; oleoresin biosynthesis. Its pathway is secondary metabolite biosynthesis; terpenoid biosynthesis. In terms of biological role, monoterpene synthase (TPS) involved in the biosynthesis of monoterpene natural products included in conifer oleoresin secretions and volatile emissions; these compounds contribute to biotic and abiotic stress defense against herbivores and pathogens. Catalyzes the conversion of (2E)-geranyl diphosphate (GPP) to (+)-alpha-pinene. In Pinus contorta (Shore pine), this protein is (+)-alpha pinene synthase 1, chloroplastic.